A 435-amino-acid polypeptide reads, in one-letter code: Glutamyl-tRNA reductase (435 aa).

Substrate-binding positions include 49–52 (TCNR), Ser-109, 114–116 (ETQ), and Gln-120. Catalysis depends on Cys-50, which acts as the Nucleophile. Residue 189 to 194 (GAGEMS) coordinates NADP(+).

Belongs to the glutamyl-tRNA reductase family. As to quaternary structure, homodimer.

The catalysed reaction is (S)-4-amino-5-oxopentanoate + tRNA(Glu) + NADP(+) = L-glutamyl-tRNA(Glu) + NADPH + H(+). Its pathway is porphyrin-containing compound metabolism; protoporphyrin-IX biosynthesis; 5-aminolevulinate from L-glutamyl-tRNA(Glu): step 1/2. Functionally, catalyzes the NADPH-dependent reduction of glutamyl-tRNA(Glu) to glutamate 1-semialdehyde (GSA). This is Glutamyl-tRNA reductase from Listeria monocytogenes serotype 4b (strain F2365).